Here is a 290-residue protein sequence, read N- to C-terminus: Agmatinase (290 aa).

Mn(2+) is bound by residues H112, D135, H137, D139, D216, and D218.

It belongs to the arginase family. Agmatinase subfamily. The cofactor is Mn(2+).

The enzyme catalyses agmatine + H2O = urea + putrescine. The protein operates within amine and polyamine biosynthesis; putrescine biosynthesis via agmatine pathway; putrescine from agmatine: step 1/1. Functionally, catalyzes the formation of putrescine from agmatine. The chain is Agmatinase (speB) from Bacillus subtilis (strain 168).